An 886-amino-acid chain; its full sequence is Methanogenesis regulatory histidine kinase FilI (886 aa).

A run of 2 helical transmembrane segments spans residues 7–27 and 270–290; these read ILAF…TFMC and VVGI…FLEL. The HAMP domain occupies 290 to 344; it reads LSILMPLATITSSVEAIREQEKGQGSRIPTVGPAELATLAESINEMLDHLESYNQ. The region spanning 349-419 is the PAS domain; the sequence is SEKRFRTIVD…EKDAGVLSGE (71 aa). In terms of domain architecture, PAC spans 421–473; the sequence is FVGEVSAHTRAGSSMTFHAVKVPLRDDRGQVTGICGIARDITDIKEAGVELLK. A Histidine kinase domain is found at 674–886; sequence TVSHDLRSPL…TCVLFTLPTP (213 aa). At H677 the chain carries Phosphohistidine; by autocatalysis.

Post-translationally, autophosphorylated.

The protein localises to the cell membrane. It catalyses the reaction ATP + protein L-histidine = ADP + protein N-phospho-L-histidine.. Member of the two-component regulatory system FilI/FilRs, which is involved in the regulation of methanogenesis. Autophosphorylates and specifically transfers the phosphoryl group to both FilR1 and FilR2. Functionally, could also catalyze the synthesis of the quorum sensing (QS) signal molecules carboxyl-acyl homoserine lactones (AHLs), which regulate the transition of the cellular morphology from short cells to filaments and of the carbon metabolic flux from biomass formation to methane production. The sequence is that of Methanogenesis regulatory histidine kinase FilI from Methanothrix harundinacea (strain 6Ac) (Methanosaeta harundinacea).